The chain runs to 235 residues: Probable endonuclease LCL3 (235 aa).

A helical membrane pass occupies residues 11 to 33 (ISLIHPKVLLLSAGVTTSLFLSY). A TNase-like domain is found at 58–216 (TPLYGRVTRV…KWLRRGLWSL (159 aa)). Arginine 107 is an active-site residue. Aspartate 112 contacts Ca(2+). Active-site residues include glutamate 115 and arginine 155.

Belongs to the LCL3 family.

It is found in the mitochondrion. It localises to the membrane. The polypeptide is Probable endonuclease LCL3 (LCL3) (Debaryomyces hansenii (strain ATCC 36239 / CBS 767 / BCRC 21394 / JCM 1990 / NBRC 0083 / IGC 2968) (Yeast)).